The sequence spans 291 residues: Small ribosomal subunit protein uS2 (291 aa).

This sequence belongs to the universal ribosomal protein uS2 family.

The polypeptide is Small ribosomal subunit protein uS2 (Orientia tsutsugamushi (strain Boryong) (Rickettsia tsutsugamushi)).